The sequence spans 293 residues: Rhomboid-like protease 1 (293 aa).

The segment at 18-40 (EHTPLYNAETGSRDSDSTSSGGA) is disordered. A run of 6 helical transmembrane segments spans residues 62–82 (VVLA…CLDT), 112–132 (LLLP…VFFQ), 148–168 (FTGL…TAFF), 174–194 (VGAS…MALT), 217–237 (LLMF…GGLL), and 262–282 (AAAI…LYAV). The active-site Nucleophile is serine 177. The active site involves histidine 232.

It belongs to the peptidase S54 family.

It is found in the cytoplasmic vesicle. Its subcellular location is the secretory vesicle. The protein localises to the microneme membrane. It carries out the reaction Cleaves type-1 transmembrane domains using a catalytic dyad composed of serine and histidine that are contributed by different transmembrane domains.. Its function is as follows. Serine protease involved in intramembrane proteolysis and the subsequent release of polypeptides from their membrane anchors. Has no detectable activity towards MIC2. The chain is Rhomboid-like protease 1 (ROM1) from Toxoplasma gondii.